Here is a 402-residue protein sequence, read N- to C-terminus: S-adenosylmethionine synthase (402 aa).

137–142 (GQGSAD) provides a ligand contact to ATP.

Belongs to the AdoMet synthase 2 family. Requires Mg(2+) as cofactor.

The catalysed reaction is L-methionine + ATP + H2O = S-adenosyl-L-methionine + phosphate + diphosphate. The protein operates within amino-acid biosynthesis; S-adenosyl-L-methionine biosynthesis; S-adenosyl-L-methionine from L-methionine: step 1/1. Catalyzes the formation of S-adenosylmethionine from methionine and ATP. This is S-adenosylmethionine synthase from Pyrobaculum aerophilum (strain ATCC 51768 / DSM 7523 / JCM 9630 / CIP 104966 / NBRC 100827 / IM2).